Consider the following 449-residue polypeptide: uncharacterized protein (449 aa).

Disordered stretches follow at residues methionine 1–serine 58 and glutamate 71–leucine 125. The span at lysine 30–serine 46 shows a compositional bias: basic and acidic residues. The segment covering serine 103–glutamate 124 has biased composition (acidic residues).

The protein belongs to the bystin family.

This is an uncharacterized protein from Caenorhabditis elegans.